The chain runs to 72 residues: Large ribosomal subunit protein uL29 (72 aa).

The protein belongs to the universal ribosomal protein uL29 family.

The chain is Large ribosomal subunit protein uL29 from Prochlorococcus marinus subsp. pastoris (strain CCMP1986 / NIES-2087 / MED4).